Consider the following 1003-residue polypeptide: Serine/threonine-protein kinase spk-1 (1003 aa).

Disordered stretches follow at residues 92-112 (NSTN…TQNE), 169-309 (NEND…SATS), and 337-408 (RPSI…KRGG). A compositionally biased stretch (acidic residues) spans 202–211 (SDEEDVESQD). Positions 248–265 (SNDDKNEKDVLVDEDTSK) are enriched in basic and acidic residues. Low complexity predominate over residues 285–300 (TIDSSVSSSTSSSSTG). Positions 346–359 (KKTEVNANEERLDD) are enriched in basic and acidic residues. Residues 422–904 (YHVIRKLGWG…AKIALKHPFL (483 aa)) enclose the Protein kinase domain. Residues 428–436 (LGWGHFSTV) and K451 contribute to the ATP site. The Proton acceptor role is filled by D555. A disordered region spans residues 927-1003 (DGLIPEPFDG…DIERFQLDLQ (77 aa)). Over residues 936–953 (GNEHQEVYRDENDSRSAS) the composition is skewed to basic and acidic residues. Residues 954 to 964 (ERSANSRSAGG) show a composition bias toward low complexity. Residues 983–992 (VITNNETTDI) show a composition bias toward polar residues. Over residues 994-1003 (DIERFQLDLQ) the composition is skewed to basic and acidic residues.

The protein belongs to the protein kinase superfamily. Ser/Thr protein kinase family. As to quaternary structure, interacts with rsp-3. In terms of tissue distribution, predominantly coexpressed with rsp-3 in adult hermaphrodite germlines.

The enzyme catalyses L-seryl-[protein] + ATP = O-phospho-L-seryl-[protein] + ADP + H(+). It carries out the reaction L-threonyl-[protein] + ATP = O-phospho-L-threonyl-[protein] + ADP + H(+). In terms of biological role, required for embryogenesis and germline development in both adult hermaphrodites and males. SR-protein kinase (SRPK) that binds directly to and phosphorylates the RS domain of rsp-3/CeSF2 in vitro. The chain is Serine/threonine-protein kinase spk-1 (spk-1) from Caenorhabditis elegans.